We begin with the raw amino-acid sequence, 194 residues long: Probable nicotinate-nucleotide adenylyltransferase (194 aa).

Belongs to the NadD family.

The enzyme catalyses nicotinate beta-D-ribonucleotide + ATP + H(+) = deamido-NAD(+) + diphosphate. It functions in the pathway cofactor biosynthesis; NAD(+) biosynthesis; deamido-NAD(+) from nicotinate D-ribonucleotide: step 1/1. Functionally, catalyzes the reversible adenylation of nicotinate mononucleotide (NaMN) to nicotinic acid adenine dinucleotide (NaAD). The sequence is that of Probable nicotinate-nucleotide adenylyltransferase from Christiangramia forsetii (strain DSM 17595 / CGMCC 1.15422 / KT0803) (Gramella forsetii).